The sequence spans 58 residues: Bestoxin (58 aa).

Residues 3 to 58 (VPGNYPLDKDGNTYTCLELGENKDCQKVCKLHGVQYGYCYAFSCWCKEYLDDKDSV) form the LCN-type CS-alpha/beta domain. Intrachain disulfides connect cysteine 18/cysteine 41, cysteine 27/cysteine 46, and cysteine 31/cysteine 48.

Expressed by the venom gland.

It is found in the secreted. Its function is as follows. Beta toxins bind voltage-independently at site-4 of sodium channels (Nav) and shift the voltage of activation toward more negative potentials thereby affecting sodium channel activation and promoting spontaneous and repetitive firing. In mice, causes intense writhing. The polypeptide is Bestoxin (Parabuthus transvaalicus (Transvaal thick-tailed scorpion)).